We begin with the raw amino-acid sequence, 210 residues long: 3-hexulose-6-phosphate synthase 1 (210 aa).

It belongs to the HPS/KGPDC family. HPS subfamily.

It catalyses the reaction D-ribulose 5-phosphate + formaldehyde = D-arabino-hex-3-ulose 6-phosphate. The protein operates within one-carbon metabolism; formaldehyde assimilation via RuMP pathway; D-fructose 6-phosphate from D-ribulose 5-phosphate and formaldehyde: step 1/2. Functionally, catalyzes the condensation of ribulose 5-phosphate with formaldehyde to form 3-hexulose 6-phosphate. The polypeptide is 3-hexulose-6-phosphate synthase 1 (Staphylococcus saprophyticus subsp. saprophyticus (strain ATCC 15305 / DSM 20229 / NCIMB 8711 / NCTC 7292 / S-41)).